We begin with the raw amino-acid sequence, 334 residues long: Glycerol-3-phosphate dehydrogenase [NAD(P)+] (334 aa).

Positions 13, 33, and 106 each coordinate NADPH. The sn-glycerol 3-phosphate site is built by Lys106, Gly137, and Ser139. Ala141 contacts NADPH. Sn-glycerol 3-phosphate-binding residues include Lys192, Asp245, Ser255, Arg256, and Asn257. The active-site Proton acceptor is the Lys192. NADPH is bound at residue Arg256. NADPH is bound by residues Val280 and Glu282.

This sequence belongs to the NAD-dependent glycerol-3-phosphate dehydrogenase family.

The protein localises to the cytoplasm. The catalysed reaction is sn-glycerol 3-phosphate + NAD(+) = dihydroxyacetone phosphate + NADH + H(+). The enzyme catalyses sn-glycerol 3-phosphate + NADP(+) = dihydroxyacetone phosphate + NADPH + H(+). The protein operates within membrane lipid metabolism; glycerophospholipid metabolism. Its function is as follows. Catalyzes the reduction of the glycolytic intermediate dihydroxyacetone phosphate (DHAP) to sn-glycerol 3-phosphate (G3P), the key precursor for phospholipid synthesis. The sequence is that of Glycerol-3-phosphate dehydrogenase [NAD(P)+] from Chlamydia caviae (strain ATCC VR-813 / DSM 19441 / 03DC25 / GPIC) (Chlamydophila caviae).